The following is a 933-amino-acid chain: Dual 3',5'-cyclic-AMP and -GMP phosphodiesterase 11A (933 aa).

Positions 42–125 (HSQGQGALGP…ASQKELRKSF (84 aa)) are disordered. Residues Ser-162, Ser-163, and Ser-239 each carry the phosphoserine modification. 2 GAF domains span residues 217–370 (DLTS…GIAI) and 402–558 (DLEK…GLGI). Residue Ser-424 participates in 3',5'-cyclic GMP binding. The 325-residue stretch at 588 to 912 (SKAEVDKFKA…SKWEELHQKR (325 aa)) folds into the PDEase domain. His-664 (proton donor) is an active-site residue. His-668, His-704, Asp-705, and Asp-816 together coordinate a divalent metal cation.

The protein belongs to the cyclic nucleotide phosphodiesterase family. A divalent metal cation is required as a cofactor. In terms of tissue distribution, isoform 1 is present in prostate, pituitary, heart and liver. It is however not present in testis nor in penis, suggesting that weak inhibition by Tadalafil (Cialis) is not relevant (at protein level). Isoform 2 may be expressed in testis. Isoform 4 is expressed in adrenal cortex.

It is found in the cytoplasm. Its subcellular location is the cytosol. It carries out the reaction 3',5'-cyclic GMP + H2O = GMP + H(+). The catalysed reaction is 3',5'-cyclic AMP + H2O = AMP + H(+). With respect to regulation, inhibited by 3-isobutyl-1-methylxanthine (IBMX), zaprinast and dipyridamole. cGMP acts as an allosteric activator. Weakly inhibited by Sildenafil (Viagra) and Tadalafil (Cialis); however, the fact that the protein is probably absent from testis, suggests that it is not biologically relevant and is not related with erectile dysfunction. In terms of biological role, plays a role in signal transduction by regulating the intracellular concentration of cyclic nucleotides cAMP and cGMP. Catalyzes the hydrolysis of both cAMP and cGMP to 5'-AMP and 5'-GMP, respectively. The polypeptide is Dual 3',5'-cyclic-AMP and -GMP phosphodiesterase 11A (Homo sapiens (Human)).